The sequence spans 108 residues: Thioredoxin C-2 (108 aa).

Residues 2–108 (SATIVNTTDE…KLAAFIDQNI (107 aa)) enclose the Thioredoxin domain. Cysteines 33 and 36 form a disulfide.

It belongs to the thioredoxin family.

Its function is as follows. Participates in various redox reactions through the reversible oxidation of its active center dithiol to a disulfide and catalyzes dithiol-disulfide exchange reactions. This Corynebacterium nephridii protein is Thioredoxin C-2.